A 557-amino-acid chain; its full sequence is Tryptophan 2-monooxygenase (557 aa).

Residues Ser49, Glu69, Arg71, Arg77, and Arg98 each contribute to the FMN site. Residue Arg98 participates in substrate binding.

Belongs to the tryptophan 2-monooxygenase family. Monomer. It depends on FMN as a cofactor.

It carries out the reaction L-tryptophan + O2 = indole-3-acetamide + CO2 + H2O. It functions in the pathway plant hormone metabolism; auxin biosynthesis. This chain is Tryptophan 2-monooxygenase (iaaM), found in Pseudomonas savastanoi (Pseudomonas syringae pv. savastanoi).